Reading from the N-terminus, the 583-residue chain is CD166 antigen (583 aa).

The signal sequence occupies residues Met1–Gly27. 2 consecutive Ig-like V-type domains span residues Trp28 to Asn120 and Pro125 to Tyr234. Over Trp28–Lys527 the chain is Extracellular. Disulfide bonds link Cys43-Cys113 and Cys157-Cys220. Asn95, Asn167, Asn265, Asn306, Asn361, Asn457, Asn480, and Asn499 each carry an N-linked (GlcNAc...) asparagine glycan. Ig-like C2-type domains lie at Pro245–Thr328, Asp333–Thr409, and Pro416–Ser501. 3 disulfides stabilise this stretch: Cys270-Cys313, Cys354-Cys392, and Cys435-Cys485. The helical transmembrane segment at Leu528 to Leu549 threads the bilayer. Residues Tyr550–Ala583 lie on the Cytoplasmic side of the membrane. Positions Asn562–Ala583 are disordered. Residues Glu569–Ala583 are compositionally biased toward basic and acidic residues.

As to quaternary structure, homodimer. Interacts (via extracellular domain) with CD6 (via extracellular domain). Homodimerization and interaction with CD6 involve the same region and cannot occur simultaneously. The affinity for CD6 is much higher than the affinity for self-association. Interacts (via glycosylated extracellular domain) with LGALS1 and LGALS3. Interaction with LGALS1 or LGALS3 inhibits interaction with CD6. In terms of processing, glycosylated. In terms of tissue distribution, detected on brain motor neurons, in differentiating retinal ganglion cells and in adult retina. Detected on leukocytes and on lymphatic endothelial cells. Detected in spleen B cells and T-cells (at protein level). Detected in adult brain and embryonic spinal cord. Expressed at high levels in the brain, and lung, and at lower levels in the liver, and the kidney, as well as by activated leukocytes.

It localises to the cell membrane. The protein localises to the cell projection. It is found in the axon. Its subcellular location is the dendrite. Its function is as follows. Cell adhesion molecule that mediates both heterotypic cell-cell contacts via its interaction with CD6, as well as homotypic cell-cell contacts. Promotes T-cell activation and proliferation via its interactions with CD6. Contributes to the formation and maturation of the immunological synapse via its interactions with CD6. Mediates homotypic interactions with cells that express ALCAM. Mediates attachment of dendritic cells onto endothelial cells via homotypic interaction. Inhibits endothelial cell migration and promotes endothelial tube formation via homotypic interactions. Required for normal organization of the lymph vessel network. Required for normal hematopoietic stem cell engraftment in the bone marrow. Plays a role in hematopoiesis; required for normal numbers of hematopoietic stem cells in bone marrow. Promotes in vitro osteoblast proliferation and differentiation. Promotes neurite extension, axon growth and axon guidance; axons grow preferentially on surfaces that contain ALCAM. Mediates outgrowth and pathfinding for retinal ganglion cell axons. This Mus musculus (Mouse) protein is CD166 antigen (Alcam).